The following is a 561-amino-acid chain: Putative transport protein YbjL (561 aa).

Transmembrane regions (helical) follow at residues 8 to 28 (LLNGNYILLLFVVLALGLCLG), 32 to 52 (LGSIQLGNSIGVLVVSLLLGQ), 66 to 86 (FMLFIFCVGVEAGPNFFSIFF), 94 to 114 (MLALVMVGSALLIALGLGKLF), and 158 to 178 (NLSLGYALTYLIGLVSLIVGA). RCK C-terminal domains lie at 202–288 (LDTD…SFRN) and 292–373 (VFDR…RIGF). Transmembrane regions (helical) follow at residues 383 to 403 (LLAFCAFFIIGLMIGMITFQF), 406 to 426 (FSFGMGNAAGLLFAGIMLGFM), 451 to 471 (VFMAGVGLSAGSGINNGLGAI), 475 to 495 (MLVAGLIVSLVPVVICFLFGA), and 540 to 560 (AIANVLLTLAGTIIVMVWPGL).

Belongs to the AAE transporter (TC 2.A.81) family. YbjL subfamily.

Its subcellular location is the cell membrane. In Escherichia fergusonii (strain ATCC 35469 / DSM 13698 / CCUG 18766 / IAM 14443 / JCM 21226 / LMG 7866 / NBRC 102419 / NCTC 12128 / CDC 0568-73), this protein is Putative transport protein YbjL.